The primary structure comprises 569 residues: S-(+)-linalool synthase, chloroplastic (569 aa).

Residues 1–39 (MALIATKISSRSCFVSAYPNNSPTFLISKFPNTVDSLSP) constitute a chloroplast transit peptide. (2E)-geranyl diphosphate-binding residues include arginine 294, aspartate 331, aspartate 335, arginine 472, and aspartate 475. Mg(2+) is bound by residues aspartate 331 and aspartate 335. Positions 331-335 (DDIFD) match the DDXXD motif motif. Mg(2+) is bound by residues aspartate 475, serine 479, and glutamate 483.

The protein belongs to the terpene synthase family. Tpsb subfamily. Requires Mg(2+) as cofactor. The cofactor is Mn(2+). Predominantly expressed in flowers but also in stems and siliques.

It localises to the plastid. The protein localises to the chloroplast. It catalyses the reaction (2E)-geranyl diphosphate + H2O = (S)-linalool + diphosphate. Its pathway is secondary metabolite biosynthesis; terpenoid biosynthesis. Involved in monoterpene (C10) biosynthesis. The major product is (S)-linalool. In Arabidopsis thaliana (Mouse-ear cress), this protein is S-(+)-linalool synthase, chloroplastic.